Consider the following 524-residue polypeptide: Peptide chain release factor 3 (524 aa).

The tr-type G domain maps to 11 to 278 (AKRRTFAIIS…SFVQYAPEPG (268 aa)). GTP is bound by residues 20 to 27 (SHPDAGKT), 88 to 92 (DTPGH), and 142 to 145 (NKLD).

The protein belongs to the TRAFAC class translation factor GTPase superfamily. Classic translation factor GTPase family. PrfC subfamily.

The protein resides in the cytoplasm. Its function is as follows. Increases the formation of ribosomal termination complexes and stimulates activities of RF-1 and RF-2. It binds guanine nucleotides and has strong preference for UGA stop codons. It may interact directly with the ribosome. The stimulation of RF-1 and RF-2 is significantly reduced by GTP and GDP, but not by GMP. In Lacticaseibacillus casei (strain BL23) (Lactobacillus casei), this protein is Peptide chain release factor 3.